A 315-amino-acid polypeptide reads, in one-letter code: tRNA-cytidine(32) 2-sulfurtransferase (315 aa).

Residues 39-44 (SGGKDS) carry the PP-loop motif motif. [4Fe-4S] cluster is bound by residues Cys-114, Cys-117, and Cys-205.

The protein belongs to the TtcA family. As to quaternary structure, homodimer. The cofactor is Mg(2+). It depends on [4Fe-4S] cluster as a cofactor.

It localises to the cytoplasm. It carries out the reaction cytidine(32) in tRNA + S-sulfanyl-L-cysteinyl-[cysteine desulfurase] + AH2 + ATP = 2-thiocytidine(32) in tRNA + L-cysteinyl-[cysteine desulfurase] + A + AMP + diphosphate + H(+). The protein operates within tRNA modification. Functionally, catalyzes the ATP-dependent 2-thiolation of cytidine in position 32 of tRNA, to form 2-thiocytidine (s(2)C32). The sulfur atoms are provided by the cysteine/cysteine desulfurase (IscS) system. In Ralstonia pickettii (strain 12J), this protein is tRNA-cytidine(32) 2-sulfurtransferase.